The chain runs to 213 residues: Glycerol-3-phosphate acyltransferase (213 aa).

6 consecutive transmembrane segments (helical) span residues 3 to 23 (IIIL…GLWI), 48 to 68 (ILGV…GTLA), 71 to 91 (LPLI…LAVI), 119 to 139 (PFFL…FSMI), 144 to 164 (VVAA…GFIL), and 165 to 185 (TSYD…IIFR).

Belongs to the PlsY family. In terms of assembly, probably interacts with PlsX.

The protein localises to the cell membrane. It catalyses the reaction an acyl phosphate + sn-glycerol 3-phosphate = a 1-acyl-sn-glycero-3-phosphate + phosphate. Its pathway is lipid metabolism; phospholipid metabolism. Its function is as follows. Catalyzes the transfer of an acyl group from acyl-phosphate (acyl-PO(4)) to glycerol-3-phosphate (G3P) to form lysophosphatidic acid (LPA). This enzyme utilizes acyl-phosphate as fatty acyl donor, but not acyl-CoA or acyl-ACP. The sequence is that of Glycerol-3-phosphate acyltransferase from Lactococcus lactis subsp. cremoris (strain MG1363).